Consider the following 221-residue polypeptide: Small ribosomal subunit protein eS1 (221 aa).

This sequence belongs to the eukaryotic ribosomal protein eS1 family.

The chain is Small ribosomal subunit protein eS1 from Pyrobaculum aerophilum (strain ATCC 51768 / DSM 7523 / JCM 9630 / CIP 104966 / NBRC 100827 / IM2).